A 465-amino-acid polypeptide reads, in one-letter code: tRNA modification GTPase MnmE (465 aa).

Arginine 25, glutamate 87, and arginine 126 together coordinate (6S)-5-formyl-5,6,7,8-tetrahydrofolate. Positions threonine 222 to glutamate 386 constitute a TrmE-type G domain. Residues asparagine 232–arginine 237, threonine 251–threonine 257, and aspartate 276–glycine 279 contribute to the GTP site. 2 residues coordinate Mg(2+): serine 236 and threonine 257. Lysine 465 lines the (6S)-5-formyl-5,6,7,8-tetrahydrofolate pocket.

The protein belongs to the TRAFAC class TrmE-Era-EngA-EngB-Septin-like GTPase superfamily. TrmE GTPase family. In terms of assembly, homodimer. Heterotetramer of two MnmE and two MnmG subunits. K(+) serves as cofactor.

The protein resides in the cytoplasm. Functionally, exhibits a very high intrinsic GTPase hydrolysis rate. Involved in the addition of a carboxymethylaminomethyl (cmnm) group at the wobble position (U34) of certain tRNAs, forming tRNA-cmnm(5)s(2)U34. This Rhodopirellula baltica (strain DSM 10527 / NCIMB 13988 / SH1) protein is tRNA modification GTPase MnmE.